Reading from the N-terminus, the 184-residue chain is Peptide deformylase (184 aa).

The Fe cation site is built by C111 and H154. E155 is a catalytic residue. H158 contributes to the Fe cation binding site.

Belongs to the polypeptide deformylase family. Fe(2+) is required as a cofactor.

It carries out the reaction N-terminal N-formyl-L-methionyl-[peptide] + H2O = N-terminal L-methionyl-[peptide] + formate. Functionally, removes the formyl group from the N-terminal Met of newly synthesized proteins. Requires at least a dipeptide for an efficient rate of reaction. N-terminal L-methionine is a prerequisite for activity but the enzyme has broad specificity at other positions. The polypeptide is Peptide deformylase (Macrococcus caseolyticus (strain JCSC5402) (Macrococcoides caseolyticum)).